Consider the following 99-residue polypeptide: uncharacterized protein (99 aa).

In terms of domain architecture, TM2 spans 32–79; that stretch reads KKSVGIAVLLSFIIPGAGQMYLGRVGKGIILLLTCWLIIPWIYSIYDA. 2 helical membrane passes run 34–54 and 56–76; these read SVGI…MYLG and VGKG…IYSI.

It localises to the cell membrane. This is an uncharacterized protein from Methanocaldococcus jannaschii (strain ATCC 43067 / DSM 2661 / JAL-1 / JCM 10045 / NBRC 100440) (Methanococcus jannaschii).